Consider the following 65-residue polypeptide: uncharacterized protein (65 aa).

Over 1 to 20 (MRFSNCFNKFKFCIGTEKKY) the chain is Cytoplasmic. The chain crosses the membrane as a helical span at residues 21 to 43 (SFPICTSTYTSFSLFACIWSIFI). Residues 44–65 (HISLNKSFIYQKSWYYSFFQNR) are Extracellular-facing.

The protein localises to the host membrane. This is an uncharacterized protein from Acidianus sp. F28 (AFV-2).